We begin with the raw amino-acid sequence, 223 residues long: UPF0441 protein YgiB (223 aa).

A disordered region spans residues glutamate 201 to glycine 223. Over residues alanine 204–glycine 223 the composition is skewed to polar residues.

This sequence belongs to the UPF0441 family.

In Salmonella arizonae (strain ATCC BAA-731 / CDC346-86 / RSK2980), this protein is UPF0441 protein YgiB.